The primary structure comprises 321 residues: 4-hydroxy-3-methylbut-2-enyl diphosphate reductase (321 aa).

[4Fe-4S] cluster is bound at residue Cys-13. 2 residues coordinate (2E)-4-hydroxy-3-methylbut-2-enyl diphosphate: His-41 and His-75. Positions 41 and 75 each coordinate dimethylallyl diphosphate. The isopentenyl diphosphate site is built by His-41 and His-75. Residue Cys-97 participates in [4Fe-4S] cluster binding. His-125 is a (2E)-4-hydroxy-3-methylbut-2-enyl diphosphate binding site. Residue His-125 participates in dimethylallyl diphosphate binding. His-125 provides a ligand contact to isopentenyl diphosphate. Residue Glu-127 is the Proton donor of the active site. Thr-168 is a binding site for (2E)-4-hydroxy-3-methylbut-2-enyl diphosphate. Cys-225 contacts [4Fe-4S] cluster. Residues Ser-253, Ser-254, Asn-255, and Ser-302 each coordinate (2E)-4-hydroxy-3-methylbut-2-enyl diphosphate. Residues Ser-253, Ser-254, Asn-255, and Ser-302 each coordinate dimethylallyl diphosphate. Isopentenyl diphosphate is bound by residues Ser-253, Ser-254, Asn-255, and Ser-302.

It belongs to the IspH family. Requires [4Fe-4S] cluster as cofactor.

The catalysed reaction is isopentenyl diphosphate + 2 oxidized [2Fe-2S]-[ferredoxin] + H2O = (2E)-4-hydroxy-3-methylbut-2-enyl diphosphate + 2 reduced [2Fe-2S]-[ferredoxin] + 2 H(+). It carries out the reaction dimethylallyl diphosphate + 2 oxidized [2Fe-2S]-[ferredoxin] + H2O = (2E)-4-hydroxy-3-methylbut-2-enyl diphosphate + 2 reduced [2Fe-2S]-[ferredoxin] + 2 H(+). Its pathway is isoprenoid biosynthesis; dimethylallyl diphosphate biosynthesis; dimethylallyl diphosphate from (2E)-4-hydroxy-3-methylbutenyl diphosphate: step 1/1. The protein operates within isoprenoid biosynthesis; isopentenyl diphosphate biosynthesis via DXP pathway; isopentenyl diphosphate from 1-deoxy-D-xylulose 5-phosphate: step 6/6. Functionally, catalyzes the conversion of 1-hydroxy-2-methyl-2-(E)-butenyl 4-diphosphate (HMBPP) into a mixture of isopentenyl diphosphate (IPP) and dimethylallyl diphosphate (DMAPP). Acts in the terminal step of the DOXP/MEP pathway for isoprenoid precursor biosynthesis. The sequence is that of 4-hydroxy-3-methylbut-2-enyl diphosphate reductase from Pelodictyon phaeoclathratiforme (strain DSM 5477 / BU-1).